Here is a 144-residue protein sequence, read N- to C-terminus: Large ribosomal subunit protein uL15 (144 aa).

Residues 1-54 (MRLNTLSPAAGAKHAPKRVGRGMGSGLGKTAGRGHKGQKSRSGGGVRPGFEGGQ) are disordered. Gly residues-rich tracts occupy residues 21–31 (RGMGSGLGKTA) and 42–52 (SGGGVRPGFEG).

It belongs to the universal ribosomal protein uL15 family. As to quaternary structure, part of the 50S ribosomal subunit.

In terms of biological role, binds to the 23S rRNA. The protein is Large ribosomal subunit protein uL15 of Shewanella oneidensis (strain ATCC 700550 / JCM 31522 / CIP 106686 / LMG 19005 / NCIMB 14063 / MR-1).